A 195-amino-acid polypeptide reads, in one-letter code: Holliday junction branch migration complex subunit RuvA (195 aa).

A domain I region spans residues M1–V63. A domain II region spans residues D64–V142. Residues G143–P150 form a flexible linker region. A domain III region spans residues P150–K195.

Belongs to the RuvA family. As to quaternary structure, homotetramer. Forms an RuvA(8)-RuvB(12)-Holliday junction (HJ) complex. HJ DNA is sandwiched between 2 RuvA tetramers; dsDNA enters through RuvA and exits via RuvB. An RuvB hexamer assembles on each DNA strand where it exits the tetramer. Each RuvB hexamer is contacted by two RuvA subunits (via domain III) on 2 adjacent RuvB subunits; this complex drives branch migration. In the full resolvosome a probable DNA-RuvA(4)-RuvB(12)-RuvC(2) complex forms which resolves the HJ.

The protein resides in the cytoplasm. In terms of biological role, the RuvA-RuvB-RuvC complex processes Holliday junction (HJ) DNA during genetic recombination and DNA repair, while the RuvA-RuvB complex plays an important role in the rescue of blocked DNA replication forks via replication fork reversal (RFR). RuvA specifically binds to HJ cruciform DNA, conferring on it an open structure. The RuvB hexamer acts as an ATP-dependent pump, pulling dsDNA into and through the RuvAB complex. HJ branch migration allows RuvC to scan DNA until it finds its consensus sequence, where it cleaves and resolves the cruciform DNA. In Mycolicibacterium smegmatis (strain ATCC 700084 / mc(2)155) (Mycobacterium smegmatis), this protein is Holliday junction branch migration complex subunit RuvA.